Here is a 23-residue protein sequence, read N- to C-terminus: Basic phospholipase A2 Smb-N6 (23 aa).

The protein belongs to the phospholipase A2 family. Group II subfamily. Ca(2+) serves as cofactor. Post-translationally, contains 7 disulfide bonds. As to expression, expressed by the venom gland.

The protein localises to the secreted. It catalyses the reaction a 1,2-diacyl-sn-glycero-3-phosphocholine + H2O = a 1-acyl-sn-glycero-3-phosphocholine + a fatty acid + H(+). Snake venom phospholipase A2 (PLA2) that shows myotoxic activities. PLA2 catalyzes the calcium-dependent hydrolysis of the 2-acyl groups in 3-sn-phosphoglycerides. In Sistrurus miliarius barbouri (Dusky pigmy rattlesnake), this protein is Basic phospholipase A2 Smb-N6.